We begin with the raw amino-acid sequence, 137 residues long: Proofreading thioesterase EntH (137 aa).

The Nucleophile or proton acceptor role is filled by Glu63.

This sequence belongs to the thioesterase PaaI family. Homotetramer. Dimer of dimers. Interacts specifically with the aryl carrier protein (ArCP) domain of EntB.

It is found in the cytoplasm. The protein operates within siderophore biosynthesis; enterobactin biosynthesis. Its function is as follows. Required for optimal enterobactin synthesis. Acts as a proofreading enzyme that prevents EntB misacylation by hydrolyzing the thioester bound existing between EntB and wrongly charged molecules. This chain is Proofreading thioesterase EntH, found in Enterobacter lignolyticus (strain SCF1).